The sequence spans 415 residues: MGEYTLRCAGCGNLLIGGAASCPLDGGLPRADYIERRFNPRKLPGIWSFIDWLPVDGWNRSTGASSVTYRSSGLAAELGLDSLYISFSGYWPERGALMRTCSFKELEAAPTMQMLRDRKAGETLVVASAGNTARAFAEVCSITDQPLILFVPVSSLDRIWTTVEPGRVLVVGVKGDYADAIKLADVLSSRSGFRAEGGARNIARRDGMGTVLLDHVRRFNSLPNHYFQAIGSGTGGIAVWEASMRIIEDGRFGERLPRLHLAQNTPCAPVYNMWHGMGSEESDFDAYGCPEGMHDDVLFNRNPPYAVPGGVRDAVISSGERIYGIDNSRAVSAQKLFEMSEGIDILPAASVAVAALVDAVESGFVENDDDILLNITGGGVKRLAEDHSRVKLKCDLTVGLRDSEDALSSIEEIFA.

Position 104 is an N6-(pyridoxal phosphate)lysine (Lys-104). Pyridoxal 5'-phosphate is bound by residues Asn-131 and Thr-376.

It belongs to the threonine synthase family. Cysteate synthase subfamily. Homotrimer. The cofactor is pyridoxal 5'-phosphate.

The catalysed reaction is O-phospho-L-serine + sulfite + H(+) = L-cysteate + phosphate. Its pathway is cofactor biosynthesis; coenzyme M biosynthesis. In terms of biological role, specifically catalyzes the beta-elimination of phosphate from L-phosphoserine and the beta-addition of sulfite to the dehydroalanine intermediate to produce L-cysteate. This chain is Cysteate synthase, found in Methanothrix thermoacetophila (strain DSM 6194 / JCM 14653 / NBRC 101360 / PT) (Methanosaeta thermophila).